The primary structure comprises 218 residues: MPMILGYWNVRGLTNPIRLLLEYTDSSYEEKKYTMGDAPDSDRSQWLNEKFKLGLDFPNLPYLIDGSHKITQSNAILRYIARKHNLCGETEEERIRVDIVENQAMDTRMQLIMLCYNPDFEKQKPEFLKTIPEKMKMYSEFLGKRPWFAGDKVTLCGFLAYDVLDQYQMFEPKCLDPFPNLKDFLARFEGLKKISAYMKTSRFLRRPIFSKMAQWSNK.

In terms of domain architecture, GST N-terminal spans 2–88 (PMILGYWNVR…YIARKHNLCG (87 aa)). Residues 7 to 8 (YW), 46 to 50 (WLNEK), 59 to 60 (NL), and 72 to 73 (QS) each bind glutathione. The GST C-terminal domain occupies 90 to 208 (TEEERIRVDI…KTSRFLRRPI (119 aa)). Position 116 (Tyr-116) interacts with substrate.

The protein belongs to the GST superfamily. Mu family. In terms of assembly, homodimer.

It localises to the cytoplasm. It catalyses the reaction RX + glutathione = an S-substituted glutathione + a halide anion + H(+). Its function is as follows. Conjugation of reduced glutathione to a wide number of exogenous and endogenous hydrophobic electrophiles. This Cricetulus longicaudatus (Long-tailed dwarf hamster) protein is Glutathione S-transferase Y1.